The sequence spans 491 residues: Ubiquitin carboxyl-terminal hydrolase 30 (491 aa).

At 1 to 31 (MPWCKQGTTDKLVREFLRTGAAARNKMMKNW) the chain is on the mitochondrial intermembrane side. The chain crosses the membrane as a helical span at residues 32 to 52 (GVIGGIAAAMAAGVYVLWGPI). Residues 53–491 (SDRRKKRKGM…MQRPGLRVEE (439 aa)) are Cytoplasmic-facing. Residues 64 to 482 (PGLLNLGNTC…SAYLLFYERM (419 aa)) enclose the USP domain. C73 (nucleophile) is an active-site residue. Residues 346 to 355 (AQSQQKTSRT) show a composition bias toward polar residues. The segment at 346-365 (AQSQQKTSRTNKAKASADPK) is disordered. The active-site Proton acceptor is the H432.

This sequence belongs to the peptidase C19 family.

The protein resides in the mitochondrion outer membrane. It catalyses the reaction Thiol-dependent hydrolysis of ester, thioester, amide, peptide and isopeptide bonds formed by the C-terminal Gly of ubiquitin (a 76-residue protein attached to proteins as an intracellular targeting signal).. Deubiquitinating enzyme that acts as a key inhibitor of mitophagy by counteracting the action of parkin (PRKN). The polypeptide is Ubiquitin carboxyl-terminal hydrolase 30 (usp30) (Danio rerio (Zebrafish)).